The primary structure comprises 215 residues: Ribosomal RNA small subunit methyltransferase G (215 aa).

S-adenosyl-L-methionine is bound by residues Gly78, Leu83, 128–129, and Arg146; that span reads AE.

It belongs to the methyltransferase superfamily. RNA methyltransferase RsmG family.

It localises to the cytoplasm. It carries out the reaction guanosine(527) in 16S rRNA + S-adenosyl-L-methionine = N(7)-methylguanosine(527) in 16S rRNA + S-adenosyl-L-homocysteine. Specifically methylates the N7 position of guanine in position 527 of 16S rRNA. In Anaeromyxobacter dehalogenans (strain 2CP-1 / ATCC BAA-258), this protein is Ribosomal RNA small subunit methyltransferase G.